A 130-amino-acid polypeptide reads, in one-letter code: Probable 15 kDa heat shock protein (130 aa).

The 110-residue stretch at 21 to 130 (ERVRILAPRV…LTKKIEVRSE (110 aa)) folds into the sHSP domain.

The protein belongs to the small heat shock protein (HSP20) family.

In Leptospira interrogans serogroup Icterohaemorrhagiae serovar Lai (strain 56601), this protein is Probable 15 kDa heat shock protein (hsp15).